We begin with the raw amino-acid sequence, 299 residues long: ATP phosphoribosyltransferase (299 aa).

This sequence belongs to the ATP phosphoribosyltransferase family. Long subfamily. In terms of assembly, equilibrium between an active dimeric form, an inactive hexameric form and higher aggregates. Interconversion between the various forms is largely reversible and is influenced by the natural substrates and inhibitors of the enzyme. Mg(2+) serves as cofactor.

It localises to the cytoplasm. It catalyses the reaction 1-(5-phospho-beta-D-ribosyl)-ATP + diphosphate = 5-phospho-alpha-D-ribose 1-diphosphate + ATP. Its pathway is amino-acid biosynthesis; L-histidine biosynthesis; L-histidine from 5-phospho-alpha-D-ribose 1-diphosphate: step 1/9. Feedback inhibited by histidine. Catalyzes the condensation of ATP and 5-phosphoribose 1-diphosphate to form N'-(5'-phosphoribosyl)-ATP (PR-ATP). Has a crucial role in the pathway because the rate of histidine biosynthesis seems to be controlled primarily by regulation of HisG enzymatic activity. The chain is ATP phosphoribosyltransferase from Erwinia tasmaniensis (strain DSM 17950 / CFBP 7177 / CIP 109463 / NCPPB 4357 / Et1/99).